The sequence spans 211 residues: Large ribosomal subunit protein uL4 (211 aa).

Positions 52-79 (GRAEVHGSNSKPYSQKGTGRARRGDKKS) are disordered. Residues 58 to 68 (GSNSKPYSQKG) show a composition bias toward polar residues.

This sequence belongs to the universal ribosomal protein uL4 family. Part of the 50S ribosomal subunit.

One of the primary rRNA binding proteins, this protein initially binds near the 5'-end of the 23S rRNA. It is important during the early stages of 50S assembly. It makes multiple contacts with different domains of the 23S rRNA in the assembled 50S subunit and ribosome. Functionally, forms part of the polypeptide exit tunnel. In Treponema denticola (strain ATCC 35405 / DSM 14222 / CIP 103919 / JCM 8153 / KCTC 15104), this protein is Large ribosomal subunit protein uL4.